The sequence spans 184 residues: GMP synthase [glutamine-hydrolyzing] subunit A (184 aa).

The Glutamine amidotransferase type-1 domain occupies 3–184 (PLYVVNNHGQ…FENFDGICSE (182 aa)). The Nucleophile role is filled by C75. Residues H162 and E164 contribute to the active site.

In terms of assembly, heterodimer composed of a glutamine amidotransferase subunit (A) and a GMP-binding subunit (B).

It carries out the reaction XMP + L-glutamine + ATP + H2O = GMP + L-glutamate + AMP + diphosphate + 2 H(+). Its pathway is purine metabolism; GMP biosynthesis; GMP from XMP (L-Gln route): step 1/1. In terms of biological role, catalyzes the synthesis of GMP from XMP. The sequence is that of GMP synthase [glutamine-hydrolyzing] subunit A from Methanoculleus marisnigri (strain ATCC 35101 / DSM 1498 / JR1).